Reading from the N-terminus, the 585-residue chain is ADP-ribosylation factor-binding protein GGA2 (585 aa).

The 137-residue stretch at 33 to 169 folds into the VHS domain; that stretch reads ACRMSLAEPD…LLKYKGYAFP (137 aa). Glycyl lysine isopeptide (Lys-Gly) (interchain with G-Cter in ubiquitin) cross-links involve residues Lys180 and Lys287. The GAT domain maps to 196 to 321; it reads EIAQAAKLEE…LLEKFNLLKN (126 aa). A disordered region spans residues 358–378; it reads LDEAPSQGNNNTNGTGTPAAA. The span at 365–374 shows a compositional bias: low complexity; sequence GNNNTNGTGT. The GAE domain occupies 466 to 581; it reads TTTAPARTLV…TQAEETAVFT (116 aa).

Binds to ARF1 and ARF2.

The protein resides in the golgi apparatus. Its subcellular location is the trans-Golgi network. Functionally, may play a role in the regulation of membrane traffic through the trans-Golgi network. The sequence is that of ADP-ribosylation factor-binding protein GGA2 (GGA2) from Saccharomyces cerevisiae (strain ATCC 204508 / S288c) (Baker's yeast).